Reading from the N-terminus, the 326-residue chain is Protein LEG1 homolog (326 aa).

An N-terminal signal peptide occupies residues 1-22 (MKSNKTIFLILLFLINFNSIYS). N58, N85, N165, N226, and N245 each carry an N-linked (GlcNAc...) asparagine glycan.

It belongs to the LEG1 family.

The protein resides in the secreted. The protein is Protein LEG1 homolog of Dictyostelium discoideum (Social amoeba).